The primary structure comprises 333 residues: 4-hydroxy-3-methylbut-2-enyl diphosphate reductase (333 aa).

Residue C34 participates in [4Fe-4S] cluster binding. (2E)-4-hydroxy-3-methylbut-2-enyl diphosphate-binding residues include H63 and H96. Dimethylallyl diphosphate is bound by residues H63 and H96. Isopentenyl diphosphate-binding residues include H63 and H96. C118 is a binding site for [4Fe-4S] cluster. Residue H146 coordinates (2E)-4-hydroxy-3-methylbut-2-enyl diphosphate. Dimethylallyl diphosphate is bound at residue H146. H146 lines the isopentenyl diphosphate pocket. E148 acts as the Proton donor in catalysis. Residue T186 coordinates (2E)-4-hydroxy-3-methylbut-2-enyl diphosphate. C216 is a binding site for [4Fe-4S] cluster. Residues S244, S245, N246, and S289 each coordinate (2E)-4-hydroxy-3-methylbut-2-enyl diphosphate. 4 residues coordinate dimethylallyl diphosphate: S244, S245, N246, and S289. 4 residues coordinate isopentenyl diphosphate: S244, S245, N246, and S289.

The protein belongs to the IspH family. [4Fe-4S] cluster serves as cofactor.

The catalysed reaction is isopentenyl diphosphate + 2 oxidized [2Fe-2S]-[ferredoxin] + H2O = (2E)-4-hydroxy-3-methylbut-2-enyl diphosphate + 2 reduced [2Fe-2S]-[ferredoxin] + 2 H(+). It catalyses the reaction dimethylallyl diphosphate + 2 oxidized [2Fe-2S]-[ferredoxin] + H2O = (2E)-4-hydroxy-3-methylbut-2-enyl diphosphate + 2 reduced [2Fe-2S]-[ferredoxin] + 2 H(+). It participates in isoprenoid biosynthesis; dimethylallyl diphosphate biosynthesis; dimethylallyl diphosphate from (2E)-4-hydroxy-3-methylbutenyl diphosphate: step 1/1. It functions in the pathway isoprenoid biosynthesis; isopentenyl diphosphate biosynthesis via DXP pathway; isopentenyl diphosphate from 1-deoxy-D-xylulose 5-phosphate: step 6/6. Functionally, catalyzes the conversion of 1-hydroxy-2-methyl-2-(E)-butenyl 4-diphosphate (HMBPP) into a mixture of isopentenyl diphosphate (IPP) and dimethylallyl diphosphate (DMAPP). Acts in the terminal step of the DOXP/MEP pathway for isoprenoid precursor biosynthesis. In Mycobacterium sp. (strain JLS), this protein is 4-hydroxy-3-methylbut-2-enyl diphosphate reductase.